We begin with the raw amino-acid sequence, 897 residues long: Translation initiation factor IF-2 (897 aa).

The tract at residues Glu52 to Ala310 is disordered. Polar residues predominate over residues Ser68 to Val82. Basic and acidic residues-rich tracts occupy residues Glu85–Val159 and Glu166–Lys217. Residues Gly256–Asn272 are compositionally biased toward basic residues. A compositionally biased stretch (basic and acidic residues) spans Lys273–Ala286. The region spanning Pro396–Lys565 is the tr-type G domain. Residues Gly405–Thr412 form a G1 region. Gly405–Thr412 provides a ligand contact to GTP. A G2 region spans residues Gly430–His434. The G3 stretch occupies residues Asp451 to Gly454. Residues Asp451–His455 and Asn505–Asp508 each bind GTP. Residues Asn505–Asp508 form a G4 region. The G5 stretch occupies residues Ser541–Lys543.

This sequence belongs to the TRAFAC class translation factor GTPase superfamily. Classic translation factor GTPase family. IF-2 subfamily.

Its subcellular location is the cytoplasm. Its function is as follows. One of the essential components for the initiation of protein synthesis. Protects formylmethionyl-tRNA from spontaneous hydrolysis and promotes its binding to the 30S ribosomal subunits. Also involved in the hydrolysis of GTP during the formation of the 70S ribosomal complex. The protein is Translation initiation factor IF-2 (infB) of Enterobacter cloacae.